The sequence spans 576 residues: Acetylcholine receptor subunit alpha-like 2 (576 aa).

The N-terminal stretch at 1-21 (MAPGCCTTRPRPIALLAHIWR) is a signal peptide. Over 22–261 (HCKPLCLLLV…FFNITLRRKT (240 aa)) the chain is Extracellular. Residue Asn-65 is glycosylated (N-linked (GlcNAc...) asparagine). Cystine bridges form between Cys-169–Cys-183 and Cys-243–Cys-244. N-linked (GlcNAc...) asparagine glycosylation occurs at Asn-254. 3 helical membrane-spanning segments follow: residues 262–285 (LFYT…VFYL), 293–311 (IALC…LLIS), and 327–346 (YLLF…IIIL). Topologically, residues 347–526 (NIHYRKPSTH…WGFVAMVMDR (180 aa)) are cytoplasmic. The chain crosses the membrane as a helical span at residues 527–545 (LFLWLFMIASLVGTFVILG). Asn-570 carries an N-linked (GlcNAc...) asparagine glycan.

This sequence belongs to the ligand-gated ion channel (TC 1.A.9) family. Acetylcholine receptor (TC 1.A.9.1) subfamily. As to expression, CNS in embryos.

The protein localises to the postsynaptic cell membrane. It is found in the cell membrane. In terms of biological role, after binding acetylcholine, the AChR responds by an extensive change in conformation that affects all subunits and leads to opening of an ion-conducting channel across the plasma membrane. The protein is Acetylcholine receptor subunit alpha-like 2 (nAChRalpha2) of Drosophila melanogaster (Fruit fly).